A 285-amino-acid polypeptide reads, in one-letter code: Bark agglutinin I polypeptide A (285 aa).

A signal peptide spans 1-31; it reads MTSYNFKTQTSFPLLLSISFFFLLLLNKVNS. The N-linked (GlcNAc...) asparagine glycan is linked to N147. E156 and D158 together coordinate Mn(2+). 4 residues coordinate Ca(2+): D158, F160, N162, and D166. 2 residues coordinate Mn(2+): D166 and H171. Residue N188 is glycosylated (N-linked (GlcNAc...) asparagine).

Belongs to the leguminous lectin family. As to quaternary structure, RPbAI is composed of two polypeptides, A and B, that associate into five different tetrameric isolectins. The A4 combination is the only one devoid of agglutination activity. Isoform B4 displays maximal agglutination activity. In terms of tissue distribution, strong expression in seed. Lower levels in the flower, and the bark of the roots. No expression in leaf. The lectin accumulates in the inner bark in autumn.

Its function is as follows. N-acetyl-D-galactosamine specific lectin. Bark lectins are storage protein that probably maintains stocks of nitrogen during dormant period. Self-aggregatable molecules that can bind their own carbohydrate side chains. They could also play a role in the plant's defense against phytophagous invertebrates or herbivorous higher animals. The sequence is that of Bark agglutinin I polypeptide A from Robinia pseudoacacia (Black locust).